A 430-amino-acid polypeptide reads, in one-letter code: Gamma-glutamyl phosphate reductase (430 aa).

The protein belongs to the gamma-glutamyl phosphate reductase family.

The protein resides in the cytoplasm. The catalysed reaction is L-glutamate 5-semialdehyde + phosphate + NADP(+) = L-glutamyl 5-phosphate + NADPH + H(+). It functions in the pathway amino-acid biosynthesis; L-proline biosynthesis; L-glutamate 5-semialdehyde from L-glutamate: step 2/2. Catalyzes the NADPH-dependent reduction of L-glutamate 5-phosphate into L-glutamate 5-semialdehyde and phosphate. The product spontaneously undergoes cyclization to form 1-pyrroline-5-carboxylate. This is Gamma-glutamyl phosphate reductase from Corynebacterium diphtheriae (strain ATCC 700971 / NCTC 13129 / Biotype gravis).